Consider the following 536-residue polypeptide: Pre-mRNA-splicing factor SLU7-B (536 aa).

A disordered region spans residues 1–42; the sequence is MATASVAFKSREDHRKKLELEEARKAGLAPAEVDEDGKEINP. Basic and acidic residues predominate over residues 9-25; it reads KSREDHRKKLELEEARK. A CCHC-type zinc finger spans residues 96–109; it reads CINCGAMTHSSKAC. Disordered regions lie at residues 176–201 and 488–507; these read LKKL…DLDD and KEDL…YNVN. Over residues 187–200 the composition is skewed to acidic residues; that stretch reads NGDDATSDGEEDLD. Phosphoserine is present on Ser-193. The Nuclear localization signal signature appears at 486 to 493; it reads LKKEDLSR. Residues 488–501 are compositionally biased toward basic and acidic residues; the sequence is KEDLSRREEKDERK.

It belongs to the SLU7 family. In terms of assembly, interacts with PHYB in photobodies under red light.

The protein resides in the nucleus. Its function is as follows. Participates in the second catalytic step of pre-mRNA splicing, when the free hydroxyl group of exon I attacks the 3'-splice site to generate spliced mRNA and the excised lariat intron. Splicing factor acting as a negative regulator of seedling photomorphogenesis by antagonizing PHYB signaling to promote light-induced hypocotyl elongation. Prevents the accumulation of functionally spliced RVE8a form, a circadian clock regulator mediating the transcriptional activation of clock genes containing evening elements (EE), but promotes PIF4 expression to fine-tune hypocotyl elongation in the light. Together with SMP1, involved in the timing of cell cycle arrest during leaf development, in a STRUWWELPETER (SWP) dependent manner; promotes cell proliferation in developing organs. The sequence is that of Pre-mRNA-splicing factor SLU7-B from Arabidopsis thaliana (Mouse-ear cress).